The primary structure comprises 395 residues: Na(+)/H(+) antiporter NhaA (395 aa).

The next 11 helical transmembrane spans lie at 15 to 35 (FLGS…AGFV), 66 to 86 (IDAW…ILEI), 101 to 121 (VALP…TYLL), 132 to 152 (GWAI…LALG), 161 to 181 (AWLM…IAVF), 184 to 204 (NALY…LIGA), 219 to 239 (CILL…AGVI), 265 to 285 (ALTP…NVGV), 301 to 321 (LGIM…ATLL), 339 to 359 (VFGL…IANL), and 366 to 386 (LVIP…LAGW).

It belongs to the NhaA Na(+)/H(+) (TC 2.A.33) antiporter family.

The protein localises to the cell inner membrane. It carries out the reaction Na(+)(in) + 2 H(+)(out) = Na(+)(out) + 2 H(+)(in). Functionally, na(+)/H(+) antiporter that extrudes sodium in exchange for external protons. The chain is Na(+)/H(+) antiporter NhaA from Gluconacetobacter diazotrophicus (strain ATCC 49037 / DSM 5601 / CCUG 37298 / CIP 103539 / LMG 7603 / PAl5).